Consider the following 303-residue polypeptide: Probable 5-dehydro-4-deoxyglucarate dehydratase (303 aa).

This sequence belongs to the DapA family.

The enzyme catalyses 5-dehydro-4-deoxy-D-glucarate + H(+) = 2,5-dioxopentanoate + CO2 + H2O. It participates in carbohydrate acid metabolism; D-glucarate degradation; 2,5-dioxopentanoate from D-glucarate: step 2/2. The chain is Probable 5-dehydro-4-deoxyglucarate dehydratase from Azotobacter vinelandii (strain DJ / ATCC BAA-1303).